The sequence spans 247 residues: Cell division protein ZapD (247 aa).

This sequence belongs to the ZapD family. In terms of assembly, interacts with FtsZ.

The protein resides in the cytoplasm. Cell division factor that enhances FtsZ-ring assembly. Directly interacts with FtsZ and promotes bundling of FtsZ protofilaments, with a reduction in FtsZ GTPase activity. In Erwinia tasmaniensis (strain DSM 17950 / CFBP 7177 / CIP 109463 / NCPPB 4357 / Et1/99), this protein is Cell division protein ZapD.